The following is an 829-amino-acid chain: Periplasmic nitrate reductase (829 aa).

Positions 1-30 (MKMTRRAFVKANAAASAAAVAGITLPASAA) form a signal peptide, tat-type signal. Positions 41–97 (ITWDKAPCRFCGTGCSVLVGTQNGKVVATQGDPEAPVNKGLNCIKGYFLSKIMYGQD) constitute a 4Fe-4S Mo/W bis-MGD-type domain. [4Fe-4S] cluster is bound by residues C48, C51, C55, and C83. Residues K85, Q152, N177, C181, 214–221 (WGSNMAEM), 245–249 (STYYH), 264–266 (QSD), M374, Q378, N484, 510–511 (SD), K533, D560, and 718–727 (TGRVLEHWHT) each bind Mo-bis(molybdopterin guanine dinucleotide). A substrate-binding site is contributed by F794. N802 and K819 together coordinate Mo-bis(molybdopterin guanine dinucleotide).

Belongs to the prokaryotic molybdopterin-containing oxidoreductase family. NasA/NapA/NarB subfamily. In terms of assembly, component of the periplasmic nitrate reductase NapAB complex composed of NapA and NapB. It depends on [4Fe-4S] cluster as a cofactor. Mo-bis(molybdopterin guanine dinucleotide) serves as cofactor. In terms of processing, predicted to be exported by the Tat system. The position of the signal peptide cleavage has not been experimentally proven.

It localises to the periplasm. The catalysed reaction is 2 Fe(II)-[cytochrome] + nitrate + 2 H(+) = 2 Fe(III)-[cytochrome] + nitrite + H2O. Functionally, catalytic subunit of the periplasmic nitrate reductase complex NapAB. Receives electrons from NapB and catalyzes the reduction of nitrate to nitrite. The sequence is that of Periplasmic nitrate reductase from Vibrio parahaemolyticus serotype O3:K6 (strain RIMD 2210633).